The following is a 115-amino-acid chain: Protein SPIRAL1-like 2 (115 aa).

The disordered stretch occupies residues 29-48; sequence AKAKPAAAAEKETTPAPVKK.

It belongs to the SPIRAL1 family.

Acts in maintaining the cortical microtubules organization essential for anisotropic cell growth. This chain is Protein SPIRAL1-like 2, found in Oryza sativa subsp. japonica (Rice).